The sequence spans 126 residues: 3-aminoacrylate deaminase RutC (126 aa).

This sequence belongs to the RutC family.

The catalysed reaction is (Z)-3-aminoacrylate + H2O + H(+) = 3-oxopropanoate + NH4(+). Involved in pyrimidine catabolism. Catalyzes the deamination of 3-aminoacrylate to malonic semialdehyde, a reaction that can also occur spontaneously. RutC may facilitate the reaction and modulate the metabolic fitness, rather than catalyzing essential functions. This Acinetobacter baylyi (strain ATCC 33305 / BD413 / ADP1) protein is 3-aminoacrylate deaminase RutC.